Consider the following 342-residue polypeptide: Dihydroorotase (342 aa).

The Zn(2+) site is built by His13 and His15. Substrate-binding positions include 15-17 and Asn41; that span reads HLR. Positions 98, 135, and 173 each coordinate Zn(2+). Lys98 carries the post-translational modification N6-carboxylysine. His135 is a substrate binding site. Leu218 contacts substrate. A Zn(2+)-binding site is contributed by Asp246. Asp246 is a catalytic residue. Positions 250 and 262 each coordinate substrate.

The protein belongs to the metallo-dependent hydrolases superfamily. DHOase family. Class II DHOase subfamily. Homodimer. It depends on Zn(2+) as a cofactor.

It catalyses the reaction (S)-dihydroorotate + H2O = N-carbamoyl-L-aspartate + H(+). It participates in pyrimidine metabolism; UMP biosynthesis via de novo pathway; (S)-dihydroorotate from bicarbonate: step 3/3. Its function is as follows. Catalyzes the reversible cyclization of carbamoyl aspartate to dihydroorotate. This chain is Dihydroorotase, found in Vibrio vulnificus (strain CMCP6).